A 465-amino-acid chain; its full sequence is MKFNVKMLSVTLGLFTSHAFAHTVYENARIYTVNDRQPTASVLVVDQGKIVYVGGNDGAKPFKATATELVDLEGKTVLPGFIESHAHPATVAVMEAGDFVYVDGARTLSQILSQLKAYLVAHPKANYLLAQGFNVASLGLPQGALPTAADLDTVSESVPIVVYDSGMHAGWANSAALNVAHVDANTPDPIPGKHYFERDNKGNPTGFMHESAMHNVVDAQQFNAVENVAEKLQPILKTYHSLGFTAITDVGDTFSTTVAAIARLNEQGKLKVYYQRGYFYDAAKSTEQNIASLKGLREKYHQGNLSINLYKLFMDGTIEMDSGAMYQPYPNGNVVEPFLSQKQINDNVAAALKAGFSVHVHAIGDKAQQSILDAFAANKKINPQLARVIAHNQVFEPQGVQKFAAMKDNLFLQTTPNWAVMYEKDETKTKIGQDAYHHQFLLGQAAREGVAVTSALTILRIPLMR.

Residues 1–21 (MKFNVKMLSVTLGLFTSHAFA) form the signal peptide.

The protein belongs to the metallo-dependent hydrolases superfamily.

Its function is as follows. Involved in the control of extracellular enzymes production. Stimulates PEL, PEH, CEL, and PRT production. The polypeptide is Exoenzymes regulatory protein AepA (aepA) (Pectobacterium carotovorum subsp. carotovorum (Erwinia carotovora subsp. carotovora)).